The primary structure comprises 230 residues: MTSDDRIKLEPSWKEALRDEFEQPYMAQLREFLRQEHAAGKEIYPPGPLIFNALNSTPLDNVKVVILGQDPYHGPNQAHGLCFSVQPGVPTPPSLVNIYKELKRDLNIDIPNHGCLQSWADQGVLMLNTTLTVERANAASHAGKGWQHFTDRIIQVVSEHQPHLVFLLWGAHAQGKQKLVDATKHLVLTSVHPSPLSAYKGFLGNGHFGRANKYLEQNGLAPIDWRLPAL.

Aspartate 70 (proton acceptor) is an active-site residue.

Belongs to the uracil-DNA glycosylase (UDG) superfamily. UNG family.

Its subcellular location is the cytoplasm. The enzyme catalyses Hydrolyzes single-stranded DNA or mismatched double-stranded DNA and polynucleotides, releasing free uracil.. In terms of biological role, excises uracil residues from the DNA which can arise as a result of misincorporation of dUMP residues by DNA polymerase or due to deamination of cytosine. The chain is Uracil-DNA glycosylase from Pseudomonas syringae pv. tomato (strain ATCC BAA-871 / DC3000).